Consider the following 593-residue polypeptide: Methylenetetrahydrofolate reductase (NADH) 1 (593 aa).

Catalysis depends on glutamate 21, which acts as the Proton donor/acceptor. Residues 21–26 and 52–53 each bind NAD(+); these read EYFPPK and TW. FAD-binding positions include 52 to 53, histidine 81, 111 to 113, tyrosine 153, 157 to 160, aspartate 175, and lysine 182; these read TW, RGD, and HPDA. Aspartate 113 lines the substrate pocket. Positions 193 and 285 each coordinate substrate.

This sequence belongs to the methylenetetrahydrofolate reductase family. In terms of assembly, homodimer. FAD is required as a cofactor.

The catalysed reaction is (6S)-5-methyl-5,6,7,8-tetrahydrofolate + NAD(+) = (6R)-5,10-methylene-5,6,7,8-tetrahydrofolate + NADH + H(+). The protein operates within one-carbon metabolism; tetrahydrofolate interconversion. With respect to regulation, plant MTHFRs strongly prefer NADH over NADPH. Not inhibited by methionine or S-adenosylmethionine. The probable reversibility of the MTHFR reaction in plants suggests that they can metabolize the methyl group of 5,10-methylenetetrahydrofolate to serine, sugars and starch. This chain is Methylenetetrahydrofolate reductase (NADH) 1, found in Zea mays (Maize).